We begin with the raw amino-acid sequence, 214 residues long: Probable transaldolase (214 aa).

The active-site Schiff-base intermediate with substrate is the Lys-83.

This sequence belongs to the transaldolase family. Type 3B subfamily.

The protein resides in the cytoplasm. The enzyme catalyses D-sedoheptulose 7-phosphate + D-glyceraldehyde 3-phosphate = D-erythrose 4-phosphate + beta-D-fructose 6-phosphate. It functions in the pathway carbohydrate degradation; pentose phosphate pathway; D-glyceraldehyde 3-phosphate and beta-D-fructose 6-phosphate from D-ribose 5-phosphate and D-xylulose 5-phosphate (non-oxidative stage): step 2/3. In terms of biological role, transaldolase is important for the balance of metabolites in the pentose-phosphate pathway. This is Probable transaldolase from Desulfatibacillum aliphaticivorans.